Consider the following 240-residue polypeptide: tRNA (guanine-N(1)-)-methyltransferase (240 aa).

Residues G108 and 127–132 contribute to the S-adenosyl-L-methionine site; that span reads LGDFIL.

The protein belongs to the RNA methyltransferase TrmD family. Homodimer.

The protein localises to the cytoplasm. It carries out the reaction guanosine(37) in tRNA + S-adenosyl-L-methionine = N(1)-methylguanosine(37) in tRNA + S-adenosyl-L-homocysteine + H(+). Functionally, specifically methylates guanosine-37 in various tRNAs. In Streptococcus mutans serotype c (strain ATCC 700610 / UA159), this protein is tRNA (guanine-N(1)-)-methyltransferase.